A 344-amino-acid polypeptide reads, in one-letter code: DNA-directed RNA polymerase subunit alpha (344 aa).

Residues 1 to 246 are alpha N-terminal domain (alpha-NTD); it reads MPVEKFLKDF…EFLFPLIDFE (246 aa). The tract at residues 259–344 is alpha C-terminal domain (alpha-CTD); sequence ESSNLLDMSI…VLSKNVKISE (86 aa).

Belongs to the RNA polymerase alpha chain family. In terms of assembly, homodimer. The RNAP catalytic core consists of 2 alpha, 1 beta, 1 beta' and 1 omega subunit. When a sigma factor is associated with the core the holoenzyme is formed, which can initiate transcription.

It carries out the reaction RNA(n) + a ribonucleoside 5'-triphosphate = RNA(n+1) + diphosphate. In terms of biological role, DNA-dependent RNA polymerase catalyzes the transcription of DNA into RNA using the four ribonucleoside triphosphates as substrates. This is DNA-directed RNA polymerase subunit alpha from Borrelia garinii subsp. bavariensis (strain ATCC BAA-2496 / DSM 23469 / PBi) (Borreliella bavariensis).